Here is a 430-residue protein sequence, read N- to C-terminus: Enolase (430 aa).

Position 167 (Gln167) interacts with (2R)-2-phosphoglycerate. The active-site Proton donor is Glu209. Mg(2+) contacts are provided by Asp245, Glu286, and Asp313. (2R)-2-phosphoglycerate-binding residues include Lys338, Arg367, Ser368, and Lys389. Lys338 acts as the Proton acceptor in catalysis.

Belongs to the enolase family. Requires Mg(2+) as cofactor.

Its subcellular location is the cytoplasm. The protein localises to the secreted. It is found in the cell surface. The catalysed reaction is (2R)-2-phosphoglycerate = phosphoenolpyruvate + H2O. It participates in carbohydrate degradation; glycolysis; pyruvate from D-glyceraldehyde 3-phosphate: step 4/5. Its function is as follows. Catalyzes the reversible conversion of 2-phosphoglycerate (2-PG) into phosphoenolpyruvate (PEP). It is essential for the degradation of carbohydrates via glycolysis. This chain is Enolase, found in Synechococcus sp. (strain CC9311).